Reading from the N-terminus, the 111-residue chain is Complement inhibitor CirpT1 (111 aa).

The first 19 residues, 1–19 (MATLIAARTKRKAPRVRIF), serve as a signal peptide directing secretion. 4 disulfide bridges follow: cysteine 40/cysteine 64, cysteine 59/cysteine 98, cysteine 76/cysteine 99, and cysteine 85/cysteine 104.

This sequence belongs to the CirpT family. In terms of tissue distribution, expressed in salivary glands.

Its subcellular location is the secreted. Complement inhibitor. Prevents complement-mediated activation of C5 by sterically preventing direct binding of C5 to its convertase (binding with domains MG4 and MG5). Binds C5 at a different binding site than the other tick complement inhibitors OmCI and RaCI3, and the drug eculizumab. Inhibits the complement in human, rat and guinea pig, and also shows a reduced inhibition in rabbit and pig. The polypeptide is Complement inhibitor CirpT1 (Rhipicephalus pulchellus (Yellow backed tick)).